The sequence spans 230 residues: 7-cyano-7-deazaguanine synthase (230 aa).

Residue 8–18 coordinates ATP; sequence LSGGMDSAVVT. The Zn(2+) site is built by Cys-186, Cys-196, Cys-199, and Cys-202.

This sequence belongs to the QueC family. The cofactor is Zn(2+).

The enzyme catalyses 7-carboxy-7-deazaguanine + NH4(+) + ATP = 7-cyano-7-deazaguanine + ADP + phosphate + H2O + H(+). Its pathway is purine metabolism; 7-cyano-7-deazaguanine biosynthesis. In terms of biological role, catalyzes the ATP-dependent conversion of 7-carboxy-7-deazaguanine (CDG) to 7-cyano-7-deazaguanine (preQ(0)). The protein is 7-cyano-7-deazaguanine synthase of Xylella fastidiosa (strain 9a5c).